The sequence spans 417 residues: 4-hydroxy-3-methylbut-2-enyl diphosphate reductase (417 aa).

Cys56 contributes to the [4Fe-4S] cluster binding site. (2E)-4-hydroxy-3-methylbut-2-enyl diphosphate is bound at residue His86. Position 86 (His86) interacts with dimethylallyl diphosphate. His86 provides a ligand contact to isopentenyl diphosphate. Cys151 is a binding site for [4Fe-4S] cluster. Residue His179 participates in (2E)-4-hydroxy-3-methylbut-2-enyl diphosphate binding. His179 provides a ligand contact to dimethylallyl diphosphate. His179 contributes to the isopentenyl diphosphate binding site. Residue Glu181 is the Proton donor of the active site. Position 244 (Thr244) interacts with (2E)-4-hydroxy-3-methylbut-2-enyl diphosphate. Cys282 serves as a coordination point for [4Fe-4S] cluster. Positions 311, 312, 313, and 374 each coordinate (2E)-4-hydroxy-3-methylbut-2-enyl diphosphate. Dimethylallyl diphosphate is bound by residues Ser311, Ser312, Asn313, and Ser374. Isopentenyl diphosphate is bound by residues Ser311, Ser312, Asn313, and Ser374.

It belongs to the IspH family. [4Fe-4S] cluster serves as cofactor.

It carries out the reaction isopentenyl diphosphate + 2 oxidized [2Fe-2S]-[ferredoxin] + H2O = (2E)-4-hydroxy-3-methylbut-2-enyl diphosphate + 2 reduced [2Fe-2S]-[ferredoxin] + 2 H(+). The enzyme catalyses dimethylallyl diphosphate + 2 oxidized [2Fe-2S]-[ferredoxin] + H2O = (2E)-4-hydroxy-3-methylbut-2-enyl diphosphate + 2 reduced [2Fe-2S]-[ferredoxin] + 2 H(+). Its pathway is isoprenoid biosynthesis; dimethylallyl diphosphate biosynthesis; dimethylallyl diphosphate from (2E)-4-hydroxy-3-methylbutenyl diphosphate: step 1/1. It functions in the pathway isoprenoid biosynthesis; isopentenyl diphosphate biosynthesis via DXP pathway; isopentenyl diphosphate from 1-deoxy-D-xylulose 5-phosphate: step 6/6. Catalyzes the conversion of 1-hydroxy-2-methyl-2-(E)-butenyl 4-diphosphate (HMBPP) into a mixture of isopentenyl diphosphate (IPP) and dimethylallyl diphosphate (DMAPP). Acts in the terminal step of the DOXP/MEP pathway for isoprenoid precursor biosynthesis. In Gloeobacter violaceus (strain ATCC 29082 / PCC 7421), this protein is 4-hydroxy-3-methylbut-2-enyl diphosphate reductase.